The chain runs to 157 residues: Transcription elongation factor GreA (157 aa).

Residues 46 to 73 (AEYHSARERQSFIEGRIAELEEIISAAE) are a coiled coil.

It belongs to the GreA/GreB family.

Necessary for efficient RNA polymerase transcription elongation past template-encoded arresting sites. The arresting sites in DNA have the property of trapping a certain fraction of elongating RNA polymerases that pass through, resulting in locked ternary complexes. Cleavage of the nascent transcript by cleavage factors such as GreA or GreB allows the resumption of elongation from the new 3'terminus. GreA releases sequences of 2 to 3 nucleotides. This Acidiphilium cryptum (strain JF-5) protein is Transcription elongation factor GreA.